We begin with the raw amino-acid sequence, 356 residues long: Histidinol-phosphate aminotransferase (356 aa).

An N6-(pyridoxal phosphate)lysine modification is found at lysine 217.

Belongs to the class-II pyridoxal-phosphate-dependent aminotransferase family. Histidinol-phosphate aminotransferase subfamily. In terms of assembly, homodimer. Requires pyridoxal 5'-phosphate as cofactor.

The enzyme catalyses L-histidinol phosphate + 2-oxoglutarate = 3-(imidazol-4-yl)-2-oxopropyl phosphate + L-glutamate. Its pathway is amino-acid biosynthesis; L-histidine biosynthesis; L-histidine from 5-phospho-alpha-D-ribose 1-diphosphate: step 7/9. The polypeptide is Histidinol-phosphate aminotransferase (Chromobacterium violaceum (strain ATCC 12472 / DSM 30191 / JCM 1249 / CCUG 213 / NBRC 12614 / NCIMB 9131 / NCTC 9757 / MK)).